Consider the following 170-residue polypeptide: Adenine phosphoribosyltransferase (170 aa).

It belongs to the purine/pyrimidine phosphoribosyltransferase family. In terms of assembly, homodimer.

It is found in the cytoplasm. The enzyme catalyses AMP + diphosphate = 5-phospho-alpha-D-ribose 1-diphosphate + adenine. Its pathway is purine metabolism; AMP biosynthesis via salvage pathway; AMP from adenine: step 1/1. Catalyzes a salvage reaction resulting in the formation of AMP, that is energically less costly than de novo synthesis. In Kosmotoga olearia (strain ATCC BAA-1733 / DSM 21960 / TBF 19.5.1), this protein is Adenine phosphoribosyltransferase.